A 278-amino-acid polypeptide reads, in one-letter code: 4-deoxy-L-threo-5-hexosulose-uronate ketol-isomerase (278 aa).

Zn(2+) contacts are provided by His-196, His-198, Glu-203, and His-245.

Belongs to the KduI family. Zn(2+) is required as a cofactor.

The enzyme catalyses 5-dehydro-4-deoxy-D-glucuronate = 3-deoxy-D-glycero-2,5-hexodiulosonate. It functions in the pathway glycan metabolism; pectin degradation; 2-dehydro-3-deoxy-D-gluconate from pectin: step 4/5. In terms of biological role, catalyzes the isomerization of 5-dehydro-4-deoxy-D-glucuronate to 3-deoxy-D-glycero-2,5-hexodiulosonate. This chain is 4-deoxy-L-threo-5-hexosulose-uronate ketol-isomerase, found in Salmonella agona (strain SL483).